We begin with the raw amino-acid sequence, 453 residues long: Methylenetetrahydrofolate--tRNA-(uracil-5-)-methyltransferase TrmFO (453 aa).

10–15 (GGGLAG) contributes to the FAD binding site. The tract at residues 433–453 (ELAPWIDSAPPTAVPAAPAAG) is disordered. The span at 441–453 (APPTAVPAAPAAG) shows a compositional bias: low complexity.

This sequence belongs to the MnmG family. TrmFO subfamily. FAD serves as cofactor.

The protein resides in the cytoplasm. It carries out the reaction uridine(54) in tRNA + (6R)-5,10-methylene-5,6,7,8-tetrahydrofolate + NADH + H(+) = 5-methyluridine(54) in tRNA + (6S)-5,6,7,8-tetrahydrofolate + NAD(+). It catalyses the reaction uridine(54) in tRNA + (6R)-5,10-methylene-5,6,7,8-tetrahydrofolate + NADPH + H(+) = 5-methyluridine(54) in tRNA + (6S)-5,6,7,8-tetrahydrofolate + NADP(+). Functionally, catalyzes the folate-dependent formation of 5-methyl-uridine at position 54 (M-5-U54) in all tRNAs. This Anaeromyxobacter dehalogenans (strain 2CP-1 / ATCC BAA-258) protein is Methylenetetrahydrofolate--tRNA-(uracil-5-)-methyltransferase TrmFO.